We begin with the raw amino-acid sequence, 1929 residues long: Myoferlin (1929 aa).

The tract at residues 1–53 is disordered; it reads MISYEPPPSAISNPTDPGGTTIIQGDGENDEEEDRDIVDAGFNPSVPGAPGQT. Residues 27–36 show a composition bias toward acidic residues; it reads GENDEEEDRD. C2 domains are found at residues 62–179 and 218–354; these read VKGK…RKWV and EDDD…EEYD. Asp-267, Asp-275, Asp-323, Asp-325, and Asp-331 together coordinate Ca(2+). Over residues 898 to 907 the composition is skewed to basic residues; the sequence is RRLVRKRKKD. The tract at residues 898–918 is disordered; the sequence is RRLVRKRKKDPKVSTTSKAAL. C2 domains follow at residues 996–1124, 1159–1283, 1408–1527, and 1645–1793; these read GANT…LLWY, RAPQ…TKHE, IPYP…SHCG, and GPPG…EKCS. Ca(2+)-binding residues include Asp-1028, Asp-1034, Asp-1090, and Asp-1092. The Ca(2+) site is built by Asp-1442, Asp-1448, Asp-1497, Asp-1499, Asp-1764, Ser-1767, and Asp-1770. A compositionally biased stretch (basic and acidic residues) spans 1845–1858; it reads DAEERPAGKGRDEP. The tract at residues 1845–1867 is disordered; the sequence is DAEERPAGKGRDEPNMNPKLDPP. The chain crosses the membrane as a helical span at residues 1894-1914; that stretch reads WVFIGLIILLLVLLFLGVFFY.

It belongs to the ferlin family. Ca(2+) serves as cofactor.

The protein resides in the cell membrane. Its subcellular location is the nucleus membrane. It localises to the cytoplasmic vesicle membrane. Its function is as follows. May play a role in membrane regeneration and repair. The chain is Myoferlin (myof) from Xenopus tropicalis (Western clawed frog).